Reading from the N-terminus, the 267-residue chain is Diaminopimelate epimerase (267 aa).

Substrate-binding residues include N15 and N66. Residue C75 is the Proton donor of the active site. Substrate is bound by residues G76 to N77, N150, N183, and E201 to R202. C210 serves as the catalytic Proton acceptor. G211–T212 is a substrate binding site.

This sequence belongs to the diaminopimelate epimerase family. Homodimer.

Its subcellular location is the cytoplasm. It catalyses the reaction (2S,6S)-2,6-diaminopimelate = meso-2,6-diaminopimelate. It participates in amino-acid biosynthesis; L-lysine biosynthesis via DAP pathway; DL-2,6-diaminopimelate from LL-2,6-diaminopimelate: step 1/1. Functionally, catalyzes the stereoinversion of LL-2,6-diaminopimelate (L,L-DAP) to meso-diaminopimelate (meso-DAP), a precursor of L-lysine and an essential component of the bacterial peptidoglycan. This Bacteroides thetaiotaomicron (strain ATCC 29148 / DSM 2079 / JCM 5827 / CCUG 10774 / NCTC 10582 / VPI-5482 / E50) protein is Diaminopimelate epimerase.